We begin with the raw amino-acid sequence, 154 residues long: Deoxyuridine 5'-triphosphate nucleotidohydrolase (154 aa).

Residues arginine 64–glycine 66, asparagine 77, threonine 81–aspartate 83, and lysine 91 contribute to the substrate site.

It belongs to the dUTPase family. Homotrimer. Mg(2+) serves as cofactor.

It carries out the reaction dUTP + H2O = dUMP + diphosphate + H(+). It functions in the pathway pyrimidine metabolism; dUMP biosynthesis; dUMP from dCTP (dUTP route): step 2/2. This enzyme is involved in nucleotide metabolism: it produces dUMP, the immediate precursor of thymidine nucleotides and it decreases the intracellular concentration of dUTP so that uracil cannot be incorporated into DNA. In Mycobacterium marinum (strain ATCC BAA-535 / M), this protein is Deoxyuridine 5'-triphosphate nucleotidohydrolase.